The chain runs to 515 residues: 2-isopropylmalate synthase (515 aa).

The Pyruvate carboxyltransferase domain occupies 4–264 (VKIFDTTLRD…NIGINQDTTQ (261 aa)). Mn(2+)-binding residues include Asp-13, His-201, His-203, and Asn-237. Residues 390–515 (ELDYLSVNTG…RQTTSAQEGI (126 aa)) are regulatory domain.

It belongs to the alpha-IPM synthase/homocitrate synthase family. LeuA type 1 subfamily. As to quaternary structure, homodimer. The cofactor is Mn(2+).

The protein localises to the cytoplasm. It carries out the reaction 3-methyl-2-oxobutanoate + acetyl-CoA + H2O = (2S)-2-isopropylmalate + CoA + H(+). The protein operates within amino-acid biosynthesis; L-leucine biosynthesis; L-leucine from 3-methyl-2-oxobutanoate: step 1/4. Its function is as follows. Catalyzes the condensation of the acetyl group of acetyl-CoA with 3-methyl-2-oxobutanoate (2-ketoisovalerate) to form 3-carboxy-3-hydroxy-4-methylpentanoate (2-isopropylmalate). The chain is 2-isopropylmalate synthase from Halothermothrix orenii (strain H 168 / OCM 544 / DSM 9562).